Here is a 254-residue protein sequence, read N- to C-terminus: Long form salivary protein D7LC (254 aa).

The first 19 residues, 1–19 (MNAVITSLLFLSLVGLGYS), serve as a signal peptide directing secretion. 2 cysteine pairs are disulfide-bonded: Cys-36–Cys-66 and Cys-62–Cys-112. Trp-49 is a binding site for thromboxane A2. Trp-52 provides a ligand contact to leukotriene C4. Residue Tyr-63 coordinates thromboxane A2. Residues Gly-136 and Lys-154 each coordinate leukotriene C4. Lys-154 is a binding site for thromboxane A2. Cystine bridges form between Cys-162–Cys-178, Cys-174–Cys-221, and Cys-211–Cys-230.

It belongs to the PBP/GOBP family.

The protein resides in the secreted. In terms of biological role, modulates blood feeding of female sandflies on vertebrate species by binding and sequestering different mediators involved in the host response. Binds leukotriene C4, leukotriene D4, leukotriene E4 and U-46619, a stable analog of thromboxane A2. Does not bind histamine or serotonin. Inhibits platelet aggregation induced by low concentrations of collagen in thromboxane A2-dependent manner. In Phlebotomus papatasi (Sandfly), this protein is Long form salivary protein D7LC.